An 81-amino-acid chain; its full sequence is Cytochrome b559 subunit alpha (81 aa).

Residues 22 to 36 (VIHSITIPSLFIAGW) traverse the membrane as a helical segment. Heme is bound at residue His-24.

Belongs to the PsbE/PsbF family. In terms of assembly, heterodimer of an alpha subunit and a beta subunit. PSII is composed of 1 copy each of membrane proteins PsbA, PsbB, PsbC, PsbD, PsbE, PsbF, PsbH, PsbI, PsbJ, PsbK, PsbL, PsbM, PsbT, PsbX, PsbY, PsbZ, Psb30/Ycf12, at least 3 peripheral proteins of the oxygen-evolving complex and a large number of cofactors. It forms dimeric complexes. It depends on heme b as a cofactor.

It localises to the plastid. It is found in the chloroplast thylakoid membrane. Functionally, this b-type cytochrome is tightly associated with the reaction center of photosystem II (PSII). PSII is a light-driven water:plastoquinone oxidoreductase that uses light energy to abstract electrons from H(2)O, generating O(2) and a proton gradient subsequently used for ATP formation. It consists of a core antenna complex that captures photons, and an electron transfer chain that converts photonic excitation into a charge separation. This chain is Cytochrome b559 subunit alpha, found in Cyanidioschyzon merolae (strain NIES-3377 / 10D) (Unicellular red alga).